We begin with the raw amino-acid sequence, 308 residues long: MNRKAPTGILGFPVTPFDNQGNIDELALSQNIKYLLDSGLEAIFVACGAGEYHSLENGEYESIIEIATSTVKGQVPVYTGVGGNLSDAVHKAKLSEKHGVDGYLIMPAYLINGEQEGIYQYVHSIATSTDLNAIVYQRDNVVMNLDTIEKLVEIPQIVGFKDGHGSMEHIIEFTQSIGNKIGWLNGMPMAEVTMPAYIPLGFDSYSSAISNYIPHISRKFYDALLEGDETTVNEIYQEVILPINRIRRQGKGYAISLIKAGMEIVGLPINSNNVRPPVTPVKKEHYEQLEEILKKALIKYPSNLTKSL.

Belongs to the DapA family.

The catalysed reaction is 5-dehydro-4-deoxy-D-glucarate + H(+) = 2,5-dioxopentanoate + CO2 + H2O. The protein operates within carbohydrate acid metabolism; D-glucarate degradation; 2,5-dioxopentanoate from D-glucarate: step 2/2. This Oceanobacillus iheyensis (strain DSM 14371 / CIP 107618 / JCM 11309 / KCTC 3954 / HTE831) protein is Probable 5-dehydro-4-deoxyglucarate dehydratase.